The following is a 433-amino-acid chain: 4-hydroxy-3-methylbut-2-en-1-yl diphosphate synthase (flavodoxin) (433 aa).

The span at 1–13 shows a compositional bias: polar residues; the sequence is MNKPETVTENSLA. The interval 1 to 23 is disordered; it reads MNKPETVTENSLASDVAGPAPRH. Cys314, Cys317, Cys360, and Glu367 together coordinate [4Fe-4S] cluster.

This sequence belongs to the IspG family. The cofactor is [4Fe-4S] cluster.

The enzyme catalyses (2E)-4-hydroxy-3-methylbut-2-enyl diphosphate + oxidized [flavodoxin] + H2O + 2 H(+) = 2-C-methyl-D-erythritol 2,4-cyclic diphosphate + reduced [flavodoxin]. Its pathway is isoprenoid biosynthesis; isopentenyl diphosphate biosynthesis via DXP pathway; isopentenyl diphosphate from 1-deoxy-D-xylulose 5-phosphate: step 5/6. In terms of biological role, converts 2C-methyl-D-erythritol 2,4-cyclodiphosphate (ME-2,4cPP) into 1-hydroxy-2-methyl-2-(E)-butenyl 4-diphosphate. This Bradyrhizobium sp. (strain ORS 278) protein is 4-hydroxy-3-methylbut-2-en-1-yl diphosphate synthase (flavodoxin).